A 403-amino-acid polypeptide reads, in one-letter code: Ribosomal RNA large subunit methyltransferase I (403 aa).

In terms of domain architecture, PUA spans 9-88; that stretch reads YPRLVLSKGR…ESIDIAFFTR (80 aa).

Belongs to the methyltransferase superfamily. RlmI family.

It is found in the cytoplasm. It carries out the reaction cytidine(1962) in 23S rRNA + S-adenosyl-L-methionine = 5-methylcytidine(1962) in 23S rRNA + S-adenosyl-L-homocysteine + H(+). Specifically methylates the cytosine at position 1962 (m5C1962) of 23S rRNA. This chain is Ribosomal RNA large subunit methyltransferase I, found in Salmonella enteritidis PT4 (strain P125109).